Reading from the N-terminus, the 180-residue chain is Alkyl hydroperoxide reductase AhpD (180 aa).

Cys-131 functions as the Proton donor in the catalytic mechanism. Cys-131 and Cys-134 are oxidised to a cystine. Cys-134 acts as the Cysteine sulfenic acid (-SOH) intermediate in catalysis.

Belongs to the AhpD family.

It catalyses the reaction N(6)-[(R)-dihydrolipoyl]-L-lysyl-[lipoyl-carrier protein] + a hydroperoxide = N(6)-[(R)-lipoyl]-L-lysyl-[lipoyl-carrier protein] + an alcohol + H2O. Functionally, antioxidant protein with alkyl hydroperoxidase activity. Required for the reduction of the AhpC active site cysteine residues and for the regeneration of the AhpC enzyme activity. The polypeptide is Alkyl hydroperoxide reductase AhpD (Beijerinckia indica subsp. indica (strain ATCC 9039 / DSM 1715 / NCIMB 8712)).